Here is a 136-residue protein sequence, read N- to C-terminus: Protein NrdI (136 aa).

This sequence belongs to the NrdI family.

Probably involved in ribonucleotide reductase function. The sequence is that of Protein NrdI from Salmonella newport (strain SL254).